We begin with the raw amino-acid sequence, 1106 residues long: Translation initiation factor IF-2 (1106 aa).

2 stretches are compositionally biased toward low complexity: residues 57-72 (GKAAGGAKAPAKPDAG) and 81-97 (APSTPSQSAGAPASAPP). Disordered stretches follow at residues 57–434 (GKAA…QKVH) and 466–497 (PSKPKNLPGNKGARPVALRRRKKETTRQRQRR). Composition is skewed to pro residues over residues 113–123 (PAKPAPSAPPS) and 138–148 (PAKPAPSAPPS). A compositionally biased stretch (low complexity) spans 172-199 (AKPVAKPASAPAPARPAQPLRPQASNRP). Pro residues-rich tracts occupy residues 200–214 (PQQPSNRPPARPAAK) and 223–235 (TAPPPRPARPGAP). Low complexity-rich tracts occupy residues 251–292 (PNQQ…QQRR), 319–329 (PQGRQGGAPSR), and 395–405 (YRPAAAPGMAG). A compositionally biased stretch (basic and acidic residues) spans 408 to 422 (RRPDWDDSARLDALR). Over residues 482-497 (ALRRRKKETTRQRQRR) the composition is skewed to basic residues. A tr-type G domain is found at 598 to 771 (RRPPVVTVMG…LLVTEVEDLK (174 aa)). Residues 607 to 614 (GHVDHGKT) form a G1 region. 607–614 (GHVDHGKT) is a GTP binding site. Residues 632–636 (GITQH) form a G2 region. The G3 stretch occupies residues 657-660 (DTPG). Residues 657 to 661 (DTPGH) and 711 to 714 (NKVD) contribute to the GTP site. A G4 region spans residues 711 to 714 (NKVD). The tract at residues 747–749 (SAL) is G5.

The protein belongs to the TRAFAC class translation factor GTPase superfamily. Classic translation factor GTPase family. IF-2 subfamily.

It localises to the cytoplasm. In terms of biological role, one of the essential components for the initiation of protein synthesis. Protects formylmethionyl-tRNA from spontaneous hydrolysis and promotes its binding to the 30S ribosomal subunits. Also involved in the hydrolysis of GTP during the formation of the 70S ribosomal complex. The chain is Translation initiation factor IF-2 from Synechococcus sp. (strain RCC307).